An 856-amino-acid polypeptide reads, in one-letter code: DNA mismatch repair protein MutS (856 aa).

An ATP-binding site is contributed by Gly-618 to Ser-625.

The protein belongs to the DNA mismatch repair MutS family.

In terms of biological role, this protein is involved in the repair of mismatches in DNA. It is possible that it carries out the mismatch recognition step. This protein has a weak ATPase activity. The sequence is that of DNA mismatch repair protein MutS from Shewanella baltica (strain OS155 / ATCC BAA-1091).